Reading from the N-terminus, the 326-residue chain is Mitochondrial substrate carrier family protein R (326 aa).

3 Solcar repeats span residues 9 to 95 (TSPM…LKNN), 101 to 214 (KSSV…FKRI), and 226 to 318 (VIGI…LCDY). 6 consecutive transmembrane segments (helical) span residues 12-32 (MVTLLAGGVSGVIAKSTIAPL), 64-84 (LAGLWKGNTATILRIFPYSAI), 104-124 (VQIFIAGSLGFSCAILLTYPL), 185-205 (GIWRGILPTLYGSIPYAGVGY), 226-246 (VIGIYKLISGGVAGGLGQTAA), and 290-310 (LFKGISINYIKVIPTNGVAFL).

The protein belongs to the mitochondrial carrier (TC 2.A.29) family.

Its subcellular location is the mitochondrion inner membrane. In terms of biological role, mitochondrial solute carriers shuttle metabolites, nucleotides, and cofactors through the mitochondrial inner membrane. May be involved in the accumulation of coenzyme A in the mitochondrial matrix. The protein is Mitochondrial substrate carrier family protein R (mcfR) of Dictyostelium discoideum (Social amoeba).